The sequence spans 341 residues: Beta-hexosaminidase (341 aa).

Residues aspartate 61, arginine 69, arginine 134, and 164–165 (KH) contribute to the substrate site. The Proton donor/acceptor role is filled by histidine 177. The Nucleophile role is filled by aspartate 249.

It belongs to the glycosyl hydrolase 3 family. NagZ subfamily.

It is found in the cytoplasm. The catalysed reaction is Hydrolysis of terminal non-reducing N-acetyl-D-hexosamine residues in N-acetyl-beta-D-hexosaminides.. It functions in the pathway cell wall biogenesis; peptidoglycan recycling. Plays a role in peptidoglycan recycling by cleaving the terminal beta-1,4-linked N-acetylglucosamine (GlcNAc) from peptide-linked peptidoglycan fragments, giving rise to free GlcNAc, anhydro-N-acetylmuramic acid and anhydro-N-acetylmuramic acid-linked peptides. This Shewanella frigidimarina (strain NCIMB 400) protein is Beta-hexosaminidase.